The following is a 151-amino-acid chain: Large ribosomal subunit protein bL9 (151 aa).

Belongs to the bacterial ribosomal protein bL9 family.

Functionally, binds to the 23S rRNA. The chain is Large ribosomal subunit protein bL9 from Chlorobium phaeovibrioides (strain DSM 265 / 1930) (Prosthecochloris vibrioformis (strain DSM 265)).